Reading from the N-terminus, the 171-residue chain is MSKKSGLSFLWLSAVAFVVDLLTKYIVVQKFDLYESVNVLPVFNLTYVRNYGAAFSFLADHSGWQQYFFILLALAISGMLVYFLAKNNAEQKIQNSAYALIIGGALANMVDRAYNGFVVDFFDFYWDIYHYPVFNIADIAICIGAGLLALDAFKSEKKKVQDKQVEKCGQK.

3 helical membrane passes run 8–28, 64–84, and 99–119; these read SFLWLSAVAFVVDLLTKYIVV, WQQYFFILLALAISGMLVYFL, and ALIIGGALANMVDRAYNGFVV. Active-site residues include D120 and D138. A helical membrane pass occupies residues 133–153; that stretch reads VFNIADIAICIGAGLLALDAF.

The protein belongs to the peptidase A8 family.

The protein resides in the cell inner membrane. It carries out the reaction Release of signal peptides from bacterial membrane prolipoproteins. Hydrolyzes -Xaa-Yaa-Zaa-|-(S,diacylglyceryl)Cys-, in which Xaa is hydrophobic (preferably Leu), and Yaa (Ala or Ser) and Zaa (Gly or Ala) have small, neutral side chains.. Its pathway is protein modification; lipoprotein biosynthesis (signal peptide cleavage). Functionally, this protein specifically catalyzes the removal of signal peptides from prolipoproteins. The polypeptide is Lipoprotein signal peptidase (Haemophilus influenzae (strain PittGG)).